Reading from the N-terminus, the 448-residue chain is Exodeoxyribonuclease 7 large subunit (448 aa).

It belongs to the XseA family. As to quaternary structure, heterooligomer composed of large and small subunits.

It is found in the cytoplasm. It carries out the reaction Exonucleolytic cleavage in either 5'- to 3'- or 3'- to 5'-direction to yield nucleoside 5'-phosphates.. Functionally, bidirectionally degrades single-stranded DNA into large acid-insoluble oligonucleotides, which are then degraded further into small acid-soluble oligonucleotides. This Shewanella sp. (strain MR-7) protein is Exodeoxyribonuclease 7 large subunit.